The primary structure comprises 420 residues: FLYWCH transcription factor 3 (420 aa).

Low complexity predominate over residues 87–104 (SSTSPDSQPSSSSSVMSS). Disordered stretches follow at residues 87 to 107 (SSTSPDSQPSSSSSVMSSTDE) and 119 to 138 (KINKAQRQSSPNSSKPYTPR). Over residues 123-134 (AQRQSSPNSSKP) the composition is skewed to polar residues. An FLYWCH-type zinc finger spans residues 140 to 195 (IRERVLFDEHLYVFDKCSYDSKKRFFRCERKNTCPARIHTPFDAERVIHKVQVHNH).

Its function is as follows. Probable transcription factor. May bind to the promoters of target genes, including micro-RNA genes, in order to repress expression, and acting redundantly with flh-2. This Caenorhabditis elegans protein is FLYWCH transcription factor 3.